Here is a 189-residue protein sequence, read N- to C-terminus: Apolipoprotein D (189 aa).

An N-terminal signal peptide occupies residues 1-20; the sequence is MGMMLLLLSMLAGLVAEAEG. Q21 carries the post-translational modification Pyrrolidone carboxylic acid. 2 disulfides stabilise this stretch: C28–C134 and C61–C185. N-linked (GlcNAc...) asparagine glycans are attached at residues N65 and N98.

Belongs to the calycin superfamily. Lipocalin family. Homodimer.

The protein resides in the secreted. Functionally, APOD occurs in the macromolecular complex with lecithin-transport and binding of bilin. Appears to be able to transport a variety of ligands in a number of different contexts. In Cavia porcellus (Guinea pig), this protein is Apolipoprotein D (APOD).